The chain runs to 433 residues: Glutamate-1-semialdehyde 2,1-aminomutase (433 aa).

N6-(pyridoxal phosphate)lysine is present on lysine 271.

The protein belongs to the class-III pyridoxal-phosphate-dependent aminotransferase family. HemL subfamily. Homodimer. It depends on pyridoxal 5'-phosphate as a cofactor.

It localises to the cytoplasm. The enzyme catalyses (S)-4-amino-5-oxopentanoate = 5-aminolevulinate. The protein operates within porphyrin-containing compound metabolism; protoporphyrin-IX biosynthesis; 5-aminolevulinate from L-glutamyl-tRNA(Glu): step 2/2. It functions in the pathway porphyrin-containing compound metabolism; chlorophyll biosynthesis. The protein is Glutamate-1-semialdehyde 2,1-aminomutase of Prochlorococcus marinus (strain MIT 9301).